The following is a 113-amino-acid chain: P antigen family member 3 (113 aa).

Over residues 1-12 (MSGHQRTRSRSR) the composition is skewed to basic residues. Disordered stretches follow at residues 1-61 (MSGH…EGAL) and 78-113 (SKTGGERGDGPNVKGEFLPNLEPVKIPEAGEGQPSV).

The protein belongs to the GAGE family.

The protein is P antigen family member 3 (PAGE3) of Homo sapiens (Human).